The chain runs to 875 residues: F-box only protein 41 (875 aa).

Disordered regions lie at residues 85–110 (ESTS…HHHH), 165–194 (SSAC…PSPA), and 347–542 (SSSC…PSRS). Positions 170 to 182 (TPPPGPGPGPCPG) are enriched in pro residues. Residues 183-194 (PASASPASPSPA) show a composition bias toward low complexity. A coiled-coil region spans residues 209 to 351 (ALEKLEVDRR…QLQVISSSCG (143 aa)). The segment covering 347-356 (SSSCGSTPSA) has biased composition (polar residues). A compositionally biased stretch (gly residues) spans 359–368 (GRGGGGGGAG). Omega-N-methylarginine is present on Arg360. A compositionally biased stretch (polar residues) spans 395–416 (HGSSPSTGASSRVPAASQSSGC). Ser478 bears the Phosphoserine mark. Thr479 is modified (phosphothreonine). One can recognise an F-box domain in the interval 496–540 (SEAEGPLDAPRPGPAMAGPLSSCRLSARPEGGSGRGRRAERVSPS). Ser762 carries the post-translational modification Phosphoserine.

In terms of assembly, directly interacts with SKP1 and CUL1.

Functionally, substrate-recognition component of the SCF (SKP1-CUL1-F-box protein)-type E3 ubiquitin ligase complex. The protein is F-box only protein 41 (FBXO41) of Homo sapiens (Human).